We begin with the raw amino-acid sequence, 457 residues long: Putative ankyrin repeat protein L112 (457 aa).

ANK repeat units follow at residues 62–91 (QRIT…NHNP), 104–132 (SKDT…ASIN), 133–162 (SSSL…EIIN), 193–219 (YINE…LDCS), 220–249 (ITVD…DPRK), 251–279 (KCWA…KPKE), 281–309 (NVDA…DTIT), 310–339 (RRDW…SQKS), 341–368 (NKAL…DFRQ), 400–429 (NNNE…DYNP), and 431–457 (KDQL…DTLK).

The polypeptide is Putative ankyrin repeat protein L112 (Acanthamoeba polyphaga mimivirus (APMV)).